The sequence spans 213 residues: Eukaryotic translation initiation factor 4E (213 aa).

Phosphoserine; by CK2 occurs at positions 2 and 15. A Phosphothreonine modification is found at Thr-22. A phosphoserine mark is found at Ser-28 and Ser-30. Lys-114 is covalently cross-linked (Glycyl lysine isopeptide (Lys-Gly) (interchain with G-Cter in ubiquitin)).

It belongs to the eukaryotic initiation factor 4E family. Component of the eIF4F complex, which composition varies with external and internal environmental conditions. It is composed of at least eIF4A (TIF1/TIF2), eIF4E (TIF45) and eIF4G (TIF4631 or TIF4632). Interacts with PAT1 in a RNA-dependent manner. eIF4E is also known to interact with other partners.

It localises to the cytoplasm. It is found in the nucleus. Recognizes and binds the 7-methylguanosine (m7G)-containing mRNA cap during an early step in the initiation of protein synthesis and facilitates ribosome binding by inducing the unwinding of the mRNAs secondary structures. The sequence is that of Eukaryotic translation initiation factor 4E (CDC33) from Saccharomyces cerevisiae (strain ATCC 204508 / S288c) (Baker's yeast).